The following is a 1142-amino-acid chain: Probable serine/threonine-protein kinase fhkB (1142 aa).

Polar residues predominate over residues 1–16 (MSQDIQTQNSYSDELY). Disordered stretches follow at residues 1–359 (MSQD…RLSQ), 374–404 (NTHT…KKQQ), and 432–451 (QIIG…QPPV). Low complexity-rich tracts occupy residues 17–72 (SSQI…FSQN) and 83–157 (QNSY…PSSQ). The span at 158 to 178 (KRFFQSQNDDFVPSSQVTSLQ) shows a compositional bias: polar residues. The stretch at 186–302 (IQQQQQQQQQ…DYEQENDDDD (117 aa)) forms a coiled coil. Low complexity predominate over residues 187-260 (QQQQQQQQQQ…QQTQQQQQQP (74 aa)). Composition is skewed to acidic residues over residues 261-277 (QEDD…DNYE) and 283-325 (EGEE…EEES). A compositionally biased stretch (low complexity) spans 333–348 (RALQSRSSQSRPLLRS). The span at 374-397 (NTHTNQLGQSSQQTNSPNVHFNSL) shows a compositional bias: polar residues. Positions 393–434 (HFNSLQQKKKQQQQQQQQQQQQQQQQQQQQQQQQQQQSQQII) form a coiled coil. Residues 432 to 443 (QIIGSQSSQSSQ) are compositionally biased toward low complexity. One can recognise an FHA domain in the interval 480 to 551 (IVVGRSSSCD…NGSYINGELI (72 aa)). The Protein kinase domain occupies 625 to 885 (YYFVKEIGSG…IKEALNHPWF (261 aa)). ATP contacts are provided by residues 631 to 639 (IGSGGYGIV) and lysine 654. The active-site Proton acceptor is the aspartate 747. The disordered stretch occupies residues 947 to 1142 (FDNNNNNNNN…HQQYTQHTTM (196 aa)). Residues 949–1034 (NNNNNNNNNN…HNHNLNNHNH (86 aa)) show a composition bias toward low complexity. The segment covering 1035–1067 (NNNHHHNHNHNHNHNHNHNHNHNHNHNHNHNHN) has biased composition (basic residues). Residues 1068-1133 (NHNNNNNNNN…NNINNNNNYH (66 aa)) are compositionally biased toward low complexity. Residues 1090–1132 (NNNNNNNNNNNNNNNNNNNNYYNNNINNINNNINNNINNNNNY) are a coiled coil.

It belongs to the protein kinase superfamily. CAMK Ser/Thr protein kinase family. CHK2 subfamily.

It catalyses the reaction L-seryl-[protein] + ATP = O-phospho-L-seryl-[protein] + ADP + H(+). The enzyme catalyses L-threonyl-[protein] + ATP = O-phospho-L-threonyl-[protein] + ADP + H(+). The protein is Probable serine/threonine-protein kinase fhkB (fhkB) of Dictyostelium discoideum (Social amoeba).